Consider the following 749-residue polypeptide: MATKFPSFSQGLAQDPTTRRIWYGIATAHDFESHDGMTEERLYQKLFSTHFGHLAVIGLWVAGNLFHIAWQGNFEQWVADPQNVQPIAHAIWDPHFGQGITDALTQAGASRPVNICYSGLYHWWYTIGMRTNTELYQGAIFIDILVAWLLFGGWLHLQPKFRPSLAWFKNAEAMMNHHLAVLFGFTNIAWTGHLVHVAIPESRGQHVGWDNFLTVLPHPEGLTPFFTGNWGAYAQNPDSLNHAFGTSEGAGTAILTFLGGVHPQSGALWLTDISHHHIAIGVFMIIGGHMYRNSFGIGHTFKEITDGHNTNHPNDPHKDGFREKIGHYGLNHNGITDTINNSLHFQLGLALACLGTAASLVAHHMGALPSYAFIAQDYTTQAALYTHHQYIAIFLMCGAFSHGAIFFVRDYDPEANKDNVLARVLETKEALISHLSWVCMLLGFHTLALYLHNDVVIAFGTPEKQILVEPIFAQFIQAASGKVMYGLDVLLANANSAPSLAAAGMPGDHYWMDLINASPEVSNFMPIGPGDFLVHHGIALGLHTTALILIKGALDARGSKLMPDKKDFGYAFACDGPGRGGTCDISAWDSTYMAIFWALNTIAWATYYWHWKHLAAWQGNMAQFNESSTHLMGWFRDYLWINSSQIINGYNPFGINNLSPWAYMFLAGHLVWATGFMFLISWRGYWQELIETLVWAHQRSPIANLVGWRDKPVALSIVQARLVGVTHFAVGNIFTFGAFVIASTASKFG.

A run of 8 helical transmembrane segments spans residues 46–69, 135–158, 175–199, 273–291, 343–366, 382–408, 430–452, and 532–550; these read LFSTHFGHLAVIGLWVAGNLFHIA, LYQGAIFIDILVAWLLFGGWLHLQ, MNHHLAVLFGFTNIAWTGHLVHVAI, ISHHHIAIGVFMIIGGHMY, LHFQLGLALACLGTAASLVAHHMG, AALYTHHQYIAIFLMCGAFSHGAIFFV, ALISHLSWVCMLLGFHTLALYLH, and FLVHHGIALGLHTTALILI. Positions 574 and 583 each coordinate [4Fe-4S] cluster. The next 2 helical transmembrane spans lie at 590–611 and 658–680; these read STYMAIFWALNTIAWATYYWHW and LSPWAYMFLAGHLVWATGFMFLI. Divinyl chlorophyll a is bound by residues H669, M677, and Y685. W686 lines the phylloquinone pocket. Residues 722–742 form a helical membrane-spanning segment; sequence LVGVTHFAVGNIFTFGAFVIA.

The protein belongs to the PsaA/PsaB family. As to quaternary structure, the PsaA/B heterodimer binds the P700 chlorophyll special pair and subsequent electron acceptors. PSI consists of a core antenna complex that captures photons, and an electron transfer chain that converts photonic excitation into a charge separation. The cyanobacterial PSI reaction center is composed of one copy each of PsaA,B,C,D,E,F,I,J,K,L,M and X, and forms trimeric complexes. Requires PSI electron transfer chain: 5 divinyl chlorophyll a, 1 divinyl chlorophyll a', 2 phylloquinones and 3 4Fe-4S clusters. PSI core antenna: 90 divinyl chlorophyll a, 22 carotenoids, 3 phospholipids and 1 galactolipid. P700 is a divinyl chlorophyll a/divinyl chlorophyll a' dimer, A0 is one or more divinyl chlorophyll a, A1 is one or both phylloquinones and FX is a shared 4Fe-4S iron-sulfur center. as cofactor.

It is found in the cellular thylakoid membrane. The enzyme catalyses reduced [plastocyanin] + hnu + oxidized [2Fe-2S]-[ferredoxin] = oxidized [plastocyanin] + reduced [2Fe-2S]-[ferredoxin]. Functionally, psaA and PsaB bind P700, the primary electron donor of photosystem I (PSI), as well as the electron acceptors A0, A1 and FX. PSI is a plastocyanin/cytochrome c6-ferredoxin oxidoreductase, converting photonic excitation into a charge separation, which transfers an electron from the donor P700 chlorophyll pair to the spectroscopically characterized acceptors A0, A1, FX, FA and FB in turn. Oxidized P700 is reduced on the lumenal side of the thylakoid membrane by plastocyanin or cytochrome c6. This Prochlorococcus marinus (strain MIT 9313) protein is Photosystem I P700 chlorophyll a apoprotein A2.